Reading from the N-terminus, the 563-residue chain is CTP synthase (563 aa).

The tract at residues 1–278 (MAKATAKNSA…DLRVLEQLHL (278 aa)) is amidoligase domain. Ser24 serves as a coordination point for CTP. Ser24 contributes to the UTP binding site. Residue 25–30 (SLGKGI) participates in ATP binding. Tyr65 is a binding site for L-glutamine. ATP is bound at residue Asp82. The Mg(2+) site is built by Asp82 and Glu151. CTP-binding positions include 158 to 160 (DIE), 198 to 203 (KTKPSQ), and Lys234. UTP-binding positions include 198–203 (KTKPSQ) and Lys234. ATP is bound at residue 250 to 252 (KDV). A Glutamine amidotransferase type-1 domain is found at 303–545 (TIALVGKYIA…VKAALEQKKA (243 aa)). Gly363 contacts L-glutamine. The active-site Nucleophile; for glutamine hydrolysis is the Cys390. L-glutamine-binding positions include 391–394 (LGMQ), Glu414, and Arg471. Active-site residues include His518 and Glu520. The segment at 542-563 (QKKANGKKPTAPSEKTKKTKTK) is disordered.

This sequence belongs to the CTP synthase family. Homotetramer.

It catalyses the reaction UTP + L-glutamine + ATP + H2O = CTP + L-glutamate + ADP + phosphate + 2 H(+). The enzyme catalyses L-glutamine + H2O = L-glutamate + NH4(+). The catalysed reaction is UTP + NH4(+) + ATP = CTP + ADP + phosphate + 2 H(+). The protein operates within pyrimidine metabolism; CTP biosynthesis via de novo pathway; CTP from UDP: step 2/2. Its activity is regulated as follows. Allosterically activated by GTP, when glutamine is the substrate; GTP has no effect on the reaction when ammonia is the substrate. The allosteric effector GTP functions by stabilizing the protein conformation that binds the tetrahedral intermediate(s) formed during glutamine hydrolysis. Inhibited by the product CTP, via allosteric rather than competitive inhibition. In terms of biological role, catalyzes the ATP-dependent amination of UTP to CTP with either L-glutamine or ammonia as the source of nitrogen. Regulates intracellular CTP levels through interactions with the four ribonucleotide triphosphates. This Fibrobacter succinogenes (strain ATCC 19169 / S85) protein is CTP synthase.